Here is a 419-residue protein sequence, read N- to C-terminus: uncharacterized protein (419 aa).

An Obg domain is found at 29-236 (PKFQDKIRIR…KLIELELKTI (208 aa)). Residues 237–414 (CEIGLVGLPN…LVRGMTQLLQ (178 aa)) form the OBG-type G domain. Residues 243–250 (GLPNAGKS), 295–299 (DIPGI), and 364–367 (ANKA) contribute to the GTP site.

This sequence belongs to the TRAFAC class OBG-HflX-like GTPase superfamily. OBG GTPase family.

The protein localises to the mitochondrion. This is an uncharacterized protein from Schizosaccharomyces pombe (strain 972 / ATCC 24843) (Fission yeast).